Reading from the N-terminus, the 104-residue chain is ATP-dependent Clp protease adapter protein ClpS (104 aa).

It belongs to the ClpS family. Binds to the N-terminal domain of the chaperone ClpA.

Involved in the modulation of the specificity of the ClpAP-mediated ATP-dependent protein degradation. This chain is ATP-dependent Clp protease adapter protein ClpS, found in Bordetella bronchiseptica (strain ATCC BAA-588 / NCTC 13252 / RB50) (Alcaligenes bronchisepticus).